We begin with the raw amino-acid sequence, 65 residues long: Hirudin-3B' (65 aa).

The segment at 1–3 is interaction with thrombin active site; it reads VVY. Intrachain disulfides connect cysteine 6-cysteine 14, cysteine 16-cysteine 28, and cysteine 22-cysteine 39. The disordered stretch occupies residues 40–65; that stretch reads VTGEGTPKPQSHNDGDFEEIPEEYLQ. Residue threonine 45 is glycosylated (O-linked (GalNAc...) threonine). The tract at residues 55–65 is interaction with fibrinogen-binding exosite of thrombin; that stretch reads DFEEIPEEYLQ. Residues 55-65 are compositionally biased toward acidic residues; sequence DFEEIPEEYLQ. Tyrosine 63 is modified (sulfotyrosine).

This sequence belongs to the protease inhibitor I14 (hirudin) family.

It is found in the secreted. Its function is as follows. Hirudin is a potent thrombin-specific protease inhibitor. It forms a stable non-covalent complex with alpha-thrombin, thereby abolishing its ability to cleave fibrinogen. This Hirudo medicinalis (Medicinal leech) protein is Hirudin-3B'.